The chain runs to 302 residues: Sulfate adenylyltransferase subunit 2 (302 aa).

The protein belongs to the PAPS reductase family. CysD subfamily. As to quaternary structure, heterodimer composed of CysD, the smaller subunit, and CysN.

The enzyme catalyses sulfate + ATP + H(+) = adenosine 5'-phosphosulfate + diphosphate. It functions in the pathway sulfur metabolism; hydrogen sulfide biosynthesis; sulfite from sulfate: step 1/3. Its function is as follows. With CysN forms the ATP sulfurylase (ATPS) that catalyzes the adenylation of sulfate producing adenosine 5'-phosphosulfate (APS) and diphosphate, the first enzymatic step in sulfur assimilation pathway. APS synthesis involves the formation of a high-energy phosphoric-sulfuric acid anhydride bond driven by GTP hydrolysis by CysN coupled to ATP hydrolysis by CysD. The polypeptide is Sulfate adenylyltransferase subunit 2 (Aeromonas hydrophila subsp. hydrophila (strain ATCC 7966 / DSM 30187 / BCRC 13018 / CCUG 14551 / JCM 1027 / KCTC 2358 / NCIMB 9240 / NCTC 8049)).